Consider the following 442-residue polypeptide: Probable folate-biopterin transporter 7 (442 aa).

The next 12 membrane-spanning stretches (helical) occupy residues 23-43 (LGFG…ANFF), 64-82 (LPMV…VYFF), 87-107 (IPYI…IAFL), 114-134 (ILAL…VEVA), 158-178 (FVWM…GIAI), 184-204 (QSTF…TINI), 241-261 (IAWI…MFFY), 270-290 (ASLL…WGFA), 302-322 (KLLT…LLFV), 335-355 (VYVL…ILPF), 379-399 (IALA…FVGV), and 410-430 (GLAI…WIYD).

The protein belongs to the major facilitator superfamily. Folate-biopterin transporter (TC 2.A.71) family.

Its subcellular location is the membrane. In terms of biological role, could mediate folate transport. This is Probable folate-biopterin transporter 7 from Arabidopsis thaliana (Mouse-ear cress).